The chain runs to 641 residues: Uromodulin (641 aa).

The signal sequence occupies residues 1-24 (MGQPPLTWMLMVVVASWFITTAAT). An N-linked (GlcNAc...) asparagine glycan is attached at asparagine 25. Positions 28 to 64 (EARWCSECHSNATCTEDEAVTTCTCQEGFTGDGLTCV) constitute an EGF-like 1 domain. 21 disulfides stabilise this stretch: cysteine 32-cysteine 41, cysteine 35-cysteine 50, cysteine 52-cysteine 63, cysteine 69-cysteine 83, cysteine 77-cysteine 92, cysteine 94-cysteine 106, cysteine 112-cysteine 126, cysteine 120-cysteine 135, cysteine 137-cysteine 148, cysteine 150-cysteine 161, cysteine 155-cysteine 170, cysteine 174-cysteine 267, cysteine 195-cysteine 282, cysteine 217-cysteine 255, cysteine 223-cysteine 287, cysteine 248-cysteine 256, cysteine 297-cysteine 306, cysteine 300-cysteine 315, cysteine 317-cysteine 347, cysteine 335-cysteine 425, and cysteine 366-cysteine 389. Residues 65–107 (DLDECAIPGAHNCSANSSCVNTPGSFSCVCPEGFRLSPGLGCT) form the EGF-like 2; calcium-binding domain. Asparagine 76 carries N-linked (GlcNAc...) asparagine glycosylation. One can recognise an EGF-like 3; calcium-binding domain in the interval 108 to 149 (DVDECAEPGLSHCHALATCVNVVGNYLCVCPAGYRGDGWHCE). The interval 150–171 (CSPGSCGPGLDCVPEGDALVCA) is beta hairpin. The segment at 172–291 (DPCQAHRTLD…CHLAYCTDPS (120 aa)) is D10C. N-linked (GlcNAc...) asparagine glycosylation is present at asparagine 232. Asparagine 275 is a glycosylation site (N-linked (GlcNAc...) asparagine). The region spanning 292–323 (SVEGTCEECSIDEDCKSDNGRWHCQCKQDFNI) is the EGF-like 4 domain. N-linked (GlcNAc...) asparagine glycosylation is present at asparagine 322. A ZP-N region spans residues 334–429 (ECGANDMKVS…KINFACSYPL (96 aa)). Residues 334-589 (ECGANDMKVS…PTCSGTRFRS (256 aa)) enclose the ZP domain. Residues 430–453 (DMKVSLKTSLQPVVSALNITVGGT) form a flexible ZP-N/ZP-C linker; important for secretion and polymerization into filaments region. The N-linked (GlcNAc...) asparagine glycan is linked to asparagine 447. The segment at 454-464 (GMFTVRMALFQ) is internal hydrophobic patch (IHP). The segment at 454 to 589 (GMFTVRMALF…PTCSGTRFRS (136 aa)) is ZP-C. 3 cysteine pairs are disulfide-bonded: cysteine 506-cysteine 566, cysteine 527-cysteine 582, and cysteine 571-cysteine 578. The tract at residues 586-589 (RFRS) is essential for cleavage by HPN. Positions 598-606 (VLNLGPITR) are external hydrophobic patch (EHP); regulates polymerization into filaments. Serine 614 carries the GPI-anchor amidated serine lipid modification. Positions 615–641 (RAAFSSLGLLKVWLPLLLSATLTLTFQ) are cleaved as a propeptide — removed in mature form.

In terms of assembly, homodimer that then polymerizes into long filaments. The filaments can additionally assemble laterally to form a sheet. The filaments consist of a zigzag-shaped backbone with laterally protruding arms which interact with bacterial adhesin fimH. Two fimH molecules can bind to a single UMOD monomer. N-glycosylated. In terms of processing, proteolytically cleaved at a conserved C-terminal proteolytic cleavage site to generate the secreted form found in urine. This cleavage is catalyzed by HPN.

It is found in the apical cell membrane. The protein resides in the basolateral cell membrane. The protein localises to the cell projection. Its subcellular location is the cilium membrane. It localises to the secreted. Its function is as follows. Functions in biogenesis and organization of the apical membrane of epithelial cells of the thick ascending limb of Henle's loop (TALH), where it promotes formation of complex filamentous gel-like structure that may play a role in the water barrier permeability. May serve as a receptor for binding and endocytosis of cytokines (IL-1, IL-2) and TNF. Facilitates neutrophil migration across renal epithelia. In the urine, may contribute to colloid osmotic pressure, retards passage of positively charged electrolytes, and inhibits formation of liquid containing supersaturated salts and subsequent formation of salt crystals. Protects against urinary tract infections by binding to type 1 fimbriated E.coli. Binds to bacterial adhesin fimH which mediates the stable formation of bacterial aggregates, prevents the binding of E.coli to uroplakins UPK1A and UPK1B which act as urothelial receptors for type I fimbriae, and allows for pathogen clearance through micturation. Also promotes aggregation of other bacteria including K.pneumoniae, P.aeruginosa and S.mitis and so may also protect against other uropathogens. The polypeptide is Uromodulin (UMOD) (Pongo abelii (Sumatran orangutan)).